The primary structure comprises 337 residues: Glyceraldehyde-3-phosphate dehydrogenase (337 aa).

NAD(+) contacts are provided by residues 12 to 13 (RI), D36, R80, and S122. D-glyceraldehyde 3-phosphate-binding positions include 153-155 (SCT) and T184. The active-site Nucleophile is the C154. N185 lines the NAD(+) pocket. Residues R199, 212 to 213 (TG), and R235 contribute to the D-glyceraldehyde 3-phosphate site. NAD(+) is bound at residue N318.

It belongs to the glyceraldehyde-3-phosphate dehydrogenase family. As to quaternary structure, homotetramer.

Its subcellular location is the cytoplasm. It carries out the reaction D-glyceraldehyde 3-phosphate + phosphate + NAD(+) = (2R)-3-phospho-glyceroyl phosphate + NADH + H(+). Its pathway is carbohydrate degradation; glycolysis; pyruvate from D-glyceraldehyde 3-phosphate: step 1/5. Catalyzes the oxidative phosphorylation of glyceraldehyde 3-phosphate (G3P) to 1,3-bisphosphoglycerate (BPG) using the cofactor NAD. The first reaction step involves the formation of a hemiacetal intermediate between G3P and a cysteine residue, and this hemiacetal intermediate is then oxidized to a thioester, with concomitant reduction of NAD to NADH. The reduced NADH is then exchanged with the second NAD, and the thioester is attacked by a nucleophilic inorganic phosphate to produce BPG. The polypeptide is Glyceraldehyde-3-phosphate dehydrogenase (gap) (Zymomonas mobilis subsp. mobilis (strain ATCC 31821 / ZM4 / CP4)).